Reading from the N-terminus, the 557-residue chain is Suprabasin (557 aa).

Positions 1-23 are cleaved as a signal peptide; that stretch reads MHLASLLSSCSLLLLLGALPGWA. 4 disordered regions span residues 150 to 175, 422 to 441, 464 to 490, and 509 to 533; these read RFGQGAHHATGQAGKEAEKFGQGAHH, GQGAHHAAEQAGKQAGKVAQ, AAGQAGKEAEKLGQGVHHAAGQAGKQE, and NQLLNDGHPGGSTTQHGGAATTTLT. Positions 153-175 are enriched in low complexity; that stretch reads QGAHHATGQAGKEAEKFGQGAHH. The span at 476–487 shows a compositional bias: low complexity; the sequence is GQGVHHAAGQAG.

It localises to the secreted. The sequence is that of Suprabasin (SBSN) from Bos taurus (Bovine).